Here is a 1154-residue protein sequence, read N- to C-terminus: Serine-aspartate repeat-containing protein E (1154 aa).

The signal sequence occupies residues 1-52 (MINRDNKKAITKKGMISNRLNKFSIRKYTVGTASILVGTTLIFGLGNQEAKA). The YSIRK-G/S signaling motif motif lies at 23–34 (FSIRKYTVGTAS). Residues 53–606 (AENTSTENAK…GDGTVKPEEK (554 aa)) form a ligand binding A region region. The interval 54-230 (ENTSTENAKQ…SKEELKNNPE (177 aa)) is disordered. Residues 61-75 (AKQDDATTSDNKEVV) show a composition bias toward basic and acidic residues. Positions 77-90 (ETENNSTTENNSTN) are enriched in low complexity. The segment covering 92-108 (IKKETNTDSQPEAKKES) has biased composition (basic and acidic residues). Positions 118-129 (NNVTATTETKPQ) are enriched in polar residues. A compositionally biased stretch (basic and acidic residues) spans 130 to 145 (NIEKENVKPSTDKTAT). The segment covering 166-178 (TTKPSTSEPSTSE) has biased composition (low complexity). A compositionally biased stretch (polar residues) spans 179-212 (IQTKPTTPQESTNIENSQPQPTPSKVDNQVTDAT). The segment covering 221-230 (SKEELKNNPE) has biased composition (basic and acidic residues). 3 consecutive CNA-B domains span residues 607 to 719 (LYKI…YKEP), 720 to 829 (KYNL…YKTP), and 830 to 940 (KYSL…EEDT). The interval 904 to 1129 (VTNTTEDDKD…TGSENNGSNN (226 aa)) is disordered. 2 stretches are compositionally biased toward acidic residues: residues 908–918 (TEDDKDADGGE) and 935–1093 (YFEE…DSDS). Positions 1117–1121 (LPETG) match the LPXTG sorting signal motif. Thr-1120 bears the Pentaglycyl murein peptidoglycan amidated threonine mark. A propeptide spans 1121–1154 (GSENNGSNNATLFGGLFAALGSLLLFGRRKKQNK) (removed by sortase).

It belongs to the serine-aspartate repeat-containing protein (SDr) family. In terms of assembly, interacts with host complement factor H/CFAH (via C-terminus). Interacts with host complement regulator C4BPA.

It localises to the secreted. Its subcellular location is the cell wall. Its function is as follows. Cell surface-associated calcium-binding protein which plays an important role in adhesion and pathogenesis. Contributes to the resistance to killing by innate immune components in blood and thus attenuates bacterial clearance by interacting with host complement factor H/CFAH and modulating its activity. Also inhibits bacterial opsonization and killing by interacting with host complement regulator C4BPA and thus inhibiting classical complement pathway activation. This Staphylococcus aureus (strain USA300) protein is Serine-aspartate repeat-containing protein E (sdrE).